A 679-amino-acid chain; its full sequence is Single-strand DNA endonuclease ASTE1 (679 aa).

An interaction with SHLD2 region spans residues 351–400 (TILPTQVENMQQPNAHRISQPIRQIIYGLLLNASPHLDKTSWNALPPQPL). Positions 625 to 645 (RSNSKKKRQKKQNTSCSKNRG) are disordered. Basic residues predominate over residues 626 to 635 (SNSKKKRQKK).

Belongs to the asteroid family. In terms of assembly, interacts with SHLD1, SHLD2, SHLD3, RIF1 and MAD2L2/REV7.

Its function is as follows. Structure-specific DNA endonuclease that specifically cleaves single-stranded DNA and 3' overhang DNA. Contributes to the control of DNA double-strand break repair choice by antagonizing BRCA1-dependent homologous recombination (HR) and promoting non-homologous end-joining (NHEJ). Recruited to the single-stranded DNA ends by SHLD2 and cleaves the 3' exposed DNA ends, therefore inhibiting DNA end resection (necessary for HR) and promoting DNA end protection (necessary for NHEJ). The protein is Single-strand DNA endonuclease ASTE1 (ASTE1) of Pongo abelii (Sumatran orangutan).